The chain runs to 216 residues: Somatotropin (216 aa).

The first 26 residues, 1 to 26 (MAAGPRTSVLLAFALLCLPWTQEVGA), serve as a signal peptide directing secretion. Residue H45 coordinates Zn(2+). C78 and C189 are disulfide-bonded. S131 is modified (phosphoserine). Residue E198 participates in Zn(2+) binding. A disulfide bridge links C206 with C214.

The protein belongs to the somatotropin/prolactin family.

The protein localises to the secreted. In terms of biological role, plays an important role in growth control. Its major role in stimulating body growth is to stimulate the liver and other tissues to secrete IGF1. It stimulates both the differentiation and proliferation of myoblasts. It also stimulates amino acid uptake and protein synthesis in muscle and other tissues. The protein is Somatotropin (GH1) of Hippopotamus amphibius (Hippopotamus).